Consider the following 261-residue polypeptide: High-affinity zinc uptake system membrane protein ZnuB (261 aa).

Over 1–7 (MIELLFP) the chain is Periplasmic. A helical transmembrane segment spans residues 8 to 28 (GWLAGIMLACAAGPLGSFVVW). Residues 29-53 (RRMSYFGDTLAHASLLGVAFGLLLD) lie on the Cytoplasmic side of the membrane. Residues 54 to 74 (VNPFYAVIAVTLLLAGGLVWL) form a helical membrane-spanning segment. Residues 75–83 (EKRPQLAID) lie on the Periplasmic side of the membrane. A helical transmembrane segment spans residues 84-104 (TLLGIMAHSALSLGLVVVSLM). The Cytoplasmic segment spans residues 105 to 121 (SNIRVDLMAYLFGDLLA). Residues 122–142 (VTPEDLISIAIGVVIVVAILF) traverse the membrane as a helical segment. The Periplasmic segment spans residues 143-177 (WQWRNLLSMTISPDLAFVDGVKLQRVKLLLMLVTA). The chain crosses the membrane as a helical span at residues 178–198 (LTIGVAMKFVGALIITSLLII). The Cytoplasmic portion of the chain corresponds to 199-213 (PAATARRFARTPEQM). Residues 214-234 (AGVAVLVGMVAVTGGLTFSAV) form a helical membrane-spanning segment. Tyr-235 is a topological domain (periplasmic). A helical membrane pass occupies residues 236 to 256 (DTPAGPSVVLCAALLFILSMM). The Cytoplasmic portion of the chain corresponds to 257–261 (KKQAS).

This sequence belongs to the ABC-3 integral membrane protein family.

Its subcellular location is the cell inner membrane. Functionally, involved in the high-affinity zinc uptake transport system. The protein is High-affinity zinc uptake system membrane protein ZnuB (znuB) of Escherichia coli (strain K12).